A 237-amino-acid chain; its full sequence is UPF0173 metal-dependent hydrolase HQ_3368A (237 aa).

This sequence belongs to the UPF0173 family.

This is UPF0173 metal-dependent hydrolase HQ_3368A from Haloquadratum walsbyi (strain DSM 16790 / HBSQ001).